The chain runs to 108 residues: Glutaredoxin (108 aa).

In terms of domain architecture, Glutaredoxin spans 3–103; the sequence is LAKAKEIVSG…PLLTEAGAIA (101 aa). Cysteine 23 and cysteine 26 form a disulfide bridge.

Belongs to the glutaredoxin family. CPYC subfamily.

The protein localises to the cytoplasm. Its function is as follows. Has a glutathione-disulfide oxidoreductase activity in the presence of NADPH and glutathione reductase. Reduces low molecular weight disulfides and proteins. This chain is Glutaredoxin, found in Solanum lycopersicum (Tomato).